The chain runs to 349 residues: Ion-translocating oxidoreductase complex subunit D (349 aa).

3 consecutive transmembrane segments (helical) span residues 37-57 (AFFG…ALSA), 73-90 (LSDN…VAIP), and 124-144 (AMAA…TWIA). T185 carries the post-translational modification FMN phosphoryl threonine. A run of 5 helical transmembrane segments spans residues 212 to 232 (ATGV…LVLL), 239 to 259 (WHIS…GFLL), 265 to 285 (GSPL…FIAT), 291 to 311 (ATSP…VYII), and 315 to 335 (GGYP…APFI).

This sequence belongs to the NqrB/RnfD family. In terms of assembly, the complex is composed of six subunits: RnfA, RnfB, RnfC, RnfD, RnfE and RnfG. The cofactor is FMN.

The protein resides in the cell inner membrane. Functionally, part of a membrane-bound complex that couples electron transfer with translocation of ions across the membrane. This Shewanella sp. (strain W3-18-1) protein is Ion-translocating oxidoreductase complex subunit D.